We begin with the raw amino-acid sequence, 475 residues long: Squamosa promoter-binding-like protein 12 (475 aa).

A disordered region spans residues 49–73; sequence NHGSTNSSGGTFTSSSELANGSSKS. The segment covering 51–73 has biased composition (low complexity); sequence GSTNSSGGTFTSSSELANGSSKS. An SBP-type zinc finger spans residues 177 to 254; it reads SSYCQVEGCK…SDHNARRRKP (78 aa). The Zn(2+) site is built by Cys180, Cys185, Cys202, His205, Cys221, Cys224, His228, and Cys240. Residues 237–253 carry the Bipartite nuclear localization signal motif; that stretch reads KKSCRRRLSDHNARRRK. Residues 437–475 form a disordered region; that stretch reads GGGGFWQDGDDPPPLDHASQAQAFMHPGNGSSSGYGHLH. Positions 465–475 are enriched in polar residues; it reads NGSSSGYGHLH.

As to expression, expressed in young panicles.

The protein localises to the nucleus. In terms of biological role, trans-acting factor that binds specifically to the consensus nucleotide sequence 5'-TNCGTACAA-3'. May be involved in panicle development. The sequence is that of Squamosa promoter-binding-like protein 12 (SPL12) from Oryza sativa subsp. indica (Rice).